A 408-amino-acid chain; its full sequence is MHLHPTRDFLRLLGERFSATRCPQVAGSLAFTTLLALVPLLTVAIGVFGNLPGMDKLGASLKDFLLENLLPDRAGRIITTYALQFSQKAARLTLIGTAMLAVTALMLLATIERVFNQIWGVRHRRPLLMRITVSWFMLTLGPVILGGSVVATGYLVSTSAEWSDRLPWIGEIAAATLPPLLLGALFSFLYYAVPNHPVRLLHALAGGLCAALVFLLMQRGLGLFIAGFPTYTLIYGTFAALPIFLLWLYLSWTVILLGALITATLPAFLERQRMLPAFPGDRAWAAVEMLAALAEAQYDGRPVGFAALRRRTNLAEHAAEALLESLRECGIASRTEGGDWVLTRAASDIRLSAVLQRFALDLTAWSALSPGRGGRIVAERLREGLQAADLSLAELAAANTSAGAVQVG.

The next 7 helical transmembrane spans lie at 29–49 (LAFT…GVFG), 92–112 (LTLI…ATIE), 131–151 (ITVS…SVVA), 172–192 (IAAA…LYYA), 197–217 (PVRL…FLLM), 220–240 (GLGL…TFAA), and 241–261 (LPIF…GALI).

This sequence belongs to the UPF0761 family.

It is found in the cell inner membrane. The sequence is that of UPF0761 membrane protein azo3165 from Azoarcus sp. (strain BH72).